The chain runs to 97 residues: uncharacterized protein (97 aa).

The span at 1–20 shows a compositional bias: basic and acidic residues; that stretch reads MAKEQTDRTTLDLFAHERRP. Residues 1 to 30 form a disordered region; the sequence is MAKEQTDRTTLDLFAHERRPGRPKTNPLSR.

This is an uncharacterized protein from Escherichia coli O157:H7.